The chain runs to 1033 residues: Ubiquitin carboxyl-terminal hydrolase 48 (1033 aa).

The 331-residue stretch at V89 to Q419 folds into the USP domain. The active-site Nucleophile is the C98. Residue H351 is the Proton acceptor of the active site. DUSP domains lie at Q457–C552, N567–C690, and M710–A823. Residues E610–E639 are disordered. The interval A878–Q920 is disordered. The Ubiquitin-like domain maps to R931–A1007.

It belongs to the peptidase C19 family.

The protein resides in the cytoplasm. The protein localises to the nucleus. The catalysed reaction is Thiol-dependent hydrolysis of ester, thioester, amide, peptide and isopeptide bonds formed by the C-terminal Gly of ubiquitin (a 76-residue protein attached to proteins as an intracellular targeting signal).. In terms of biological role, recognizes and hydrolyzes the peptide bond at the C-terminal Gly of ubiquitin. Involved in the processing of poly-ubiquitin precursors as well as that of ubiquitinated proteins. The protein is Ubiquitin carboxyl-terminal hydrolase 48 (USP48) of Gallus gallus (Chicken).